A 155-amino-acid chain; its full sequence is Alanine- and arginine-rich domain-containing protein (155 aa).

The polypeptide is Alanine- and arginine-rich domain-containing protein (AARD) (Homo sapiens (Human)).